The chain runs to 507 residues: Histidine ammonia-lyase (507 aa).

Positions 141-143 (ASG) form a cross-link, 5-imidazolinone (Ala-Gly). Residue S142 is modified to 2,3-didehydroalanine (Ser).

Belongs to the PAL/histidase family. In terms of processing, contains an active site 4-methylidene-imidazol-5-one (MIO), which is formed autocatalytically by cyclization and dehydration of residues Ala-Ser-Gly.

Its subcellular location is the cytoplasm. It carries out the reaction L-histidine = trans-urocanate + NH4(+). It functions in the pathway amino-acid degradation; L-histidine degradation into L-glutamate; N-formimidoyl-L-glutamate from L-histidine: step 1/3. The polypeptide is Histidine ammonia-lyase (Paraburkholderia phytofirmans (strain DSM 17436 / LMG 22146 / PsJN) (Burkholderia phytofirmans)).